The primary structure comprises 323 residues: tRNA U34 carboxymethyltransferase (323 aa).

Carboxy-S-adenosyl-L-methionine is bound by residues Lys-91, Trp-105, Lys-110, Gly-130, 181–182 (IE), Met-196, Tyr-200, and Arg-315.

The protein belongs to the class I-like SAM-binding methyltransferase superfamily. CmoB family. Homotetramer.

It carries out the reaction carboxy-S-adenosyl-L-methionine + 5-hydroxyuridine(34) in tRNA = 5-carboxymethoxyuridine(34) in tRNA + S-adenosyl-L-homocysteine + H(+). Functionally, catalyzes carboxymethyl transfer from carboxy-S-adenosyl-L-methionine (Cx-SAM) to 5-hydroxyuridine (ho5U) to form 5-carboxymethoxyuridine (cmo5U) at position 34 in tRNAs. The protein is tRNA U34 carboxymethyltransferase of Serratia proteamaculans (strain 568).